The chain runs to 447 residues: Phosphoglucosamine mutase (447 aa).

Ser105 acts as the Phosphoserine intermediate in catalysis. Residues Ser105, Asp244, Asp246, and Asp248 each coordinate Mg(2+). Residue Ser105 is modified to Phosphoserine.

This sequence belongs to the phosphohexose mutase family. Mg(2+) serves as cofactor. Activated by phosphorylation.

It carries out the reaction alpha-D-glucosamine 1-phosphate = D-glucosamine 6-phosphate. In terms of biological role, catalyzes the conversion of glucosamine-6-phosphate to glucosamine-1-phosphate. The polypeptide is Phosphoglucosamine mutase (Polynucleobacter asymbioticus (strain DSM 18221 / CIP 109841 / QLW-P1DMWA-1) (Polynucleobacter necessarius subsp. asymbioticus)).